Reading from the N-terminus, the 462-residue chain is GTPase Der (462 aa).

2 EngA-type G domains span residues 2–164 (KKIA…PKKE) and 195–366 (INVA…KNYS). GTP contacts are provided by residues 8 to 15 (GKPNVGKS), 55 to 59 (DTGGI), 116 to 119 (NKID), 201 to 208 (GRVNVGKS), 248 to 252 (DTAGI), and 312 to 315 (NKWD). The 85-residue stretch at 367 to 451 (TWLPTGQLNR…PIILRPRKRG (85 aa)) folds into the KH-like domain.

The protein belongs to the TRAFAC class TrmE-Era-EngA-EngB-Septin-like GTPase superfamily. EngA (Der) GTPase family. In terms of assembly, associates with the 50S ribosomal subunit.

In terms of biological role, GTPase that plays an essential role in the late steps of ribosome biogenesis. This is GTPase Der from Nitratiruptor sp. (strain SB155-2).